Here is a 132-residue protein sequence, read N- to C-terminus: ATP synthase epsilon chain (132 aa).

It belongs to the ATPase epsilon chain family. F-type ATPases have 2 components, CF(1) - the catalytic core - and CF(0) - the membrane proton channel. CF(1) has five subunits: alpha(3), beta(3), gamma(1), delta(1), epsilon(1). CF(0) has three main subunits: a, b and c.

The protein resides in the cell inner membrane. Functionally, produces ATP from ADP in the presence of a proton gradient across the membrane. In Gloeobacter violaceus (strain ATCC 29082 / PCC 7421), this protein is ATP synthase epsilon chain.